We begin with the raw amino-acid sequence, 319 residues long: MRVLLIAGGVSPEHEVSLLSAEGVLRHIPFPTDLAVIAQDGRWLLGEKALTALEAKAAPEGEHPFPPPLSWERYDVVFPLLHGRFGEDGTVQGFLELLGKPYVGAGVAASALCMDKDLSKRVLAQAGVPVVPWVAVRKGEPPVVPFDPPFFVKPANTGSSVGISRVERFQDLEAALALAFRYDEKAVVEKALSPVRELEVGVLGNVFGEASPVGEVRYEAPFYDYETKYTPGRAELLIPAPLDPGTQETVQELALKAYKVLGVRGMARVDFFLAEGELYLNELNTIPGFTPTSMYPRLFEAGGVAYPELLRRLVELALT.

Residues 120–315 enclose the ATP-grasp domain; the sequence is KRVLAQAGVP…YPELLRRLVE (196 aa). Residue 147 to 198 coordinates ATP; that stretch reads DPPFFVKPANTGSSVGISRVERFQDLEAALALAFRYDEKAVVEKALSPVREL. Asp270, Glu282, and Asn284 together coordinate Mg(2+).

This sequence belongs to the D-alanine--D-alanine ligase family. Mg(2+) is required as a cofactor. Requires Mn(2+) as cofactor.

It localises to the cytoplasm. The catalysed reaction is 2 D-alanine + ATP = D-alanyl-D-alanine + ADP + phosphate + H(+). Its pathway is cell wall biogenesis; peptidoglycan biosynthesis. Its function is as follows. Cell wall formation. In Thermus thermophilus (strain ATCC 27634 / DSM 579 / HB8), this protein is D-alanine--D-alanine ligase.